The chain runs to 271 residues: NH(3)-dependent NAD(+) synthetase (271 aa).

43 to 50 (GISGGQDS) is a binding site for ATP. Mg(2+) is bound at residue Asp49. Arg136 contacts deamido-NAD(+). Thr156 lines the ATP pocket. Glu161 is a binding site for Mg(2+). 2 residues coordinate deamido-NAD(+): Lys169 and Asp176. ATP contacts are provided by Lys185 and Thr207. 256–257 (HK) serves as a coordination point for deamido-NAD(+).

It belongs to the NAD synthetase family. Homodimer.

It carries out the reaction deamido-NAD(+) + NH4(+) + ATP = AMP + diphosphate + NAD(+) + H(+). It participates in cofactor biosynthesis; NAD(+) biosynthesis; NAD(+) from deamido-NAD(+) (ammonia route): step 1/1. Catalyzes the ATP-dependent amidation of deamido-NAD to form NAD. Uses ammonia as a nitrogen source. The chain is NH(3)-dependent NAD(+) synthetase from Tropheryma whipplei (strain TW08/27) (Whipple's bacillus).